The following is a 313-amino-acid chain: Porphobilinogen deaminase (313 aa).

Cysteine 242 carries the S-(dipyrrolylmethanemethyl)cysteine modification.

The protein belongs to the HMBS family. Monomer. It depends on dipyrromethane as a cofactor.

It catalyses the reaction 4 porphobilinogen + H2O = hydroxymethylbilane + 4 NH4(+). The protein operates within porphyrin-containing compound metabolism; protoporphyrin-IX biosynthesis; coproporphyrinogen-III from 5-aminolevulinate: step 2/4. Functionally, tetrapolymerization of the monopyrrole PBG into the hydroxymethylbilane pre-uroporphyrinogen in several discrete steps. This Yersinia pseudotuberculosis serotype O:3 (strain YPIII) protein is Porphobilinogen deaminase.